The sequence spans 208 residues: Ribosomal RNA small subunit methyltransferase G (208 aa).

Residues glycine 73, leucine 78, valine 127 to glutamate 128, and arginine 141 contribute to the S-adenosyl-L-methionine site.

It belongs to the methyltransferase superfamily. RNA methyltransferase RsmG family.

It localises to the cytoplasm. The catalysed reaction is guanosine(527) in 16S rRNA + S-adenosyl-L-methionine = N(7)-methylguanosine(527) in 16S rRNA + S-adenosyl-L-homocysteine. Specifically methylates the N7 position of guanine in position 527 of 16S rRNA. The polypeptide is Ribosomal RNA small subunit methyltransferase G (Cereibacter sphaeroides (strain ATCC 17025 / ATH 2.4.3) (Rhodobacter sphaeroides)).